The chain runs to 206 residues: Uridine kinase (206 aa).

11–18 (GGSGSGKT) lines the ATP pocket.

It belongs to the uridine kinase family.

The protein resides in the cytoplasm. The catalysed reaction is uridine + ATP = UMP + ADP + H(+). The enzyme catalyses cytidine + ATP = CMP + ADP + H(+). It participates in pyrimidine metabolism; CTP biosynthesis via salvage pathway; CTP from cytidine: step 1/3. Its pathway is pyrimidine metabolism; UMP biosynthesis via salvage pathway; UMP from uridine: step 1/1. The chain is Uridine kinase from Macrococcus caseolyticus (strain JCSC5402) (Macrococcoides caseolyticum).